Here is a 372-residue protein sequence, read N- to C-terminus: 4-hydroxy-3-methylbut-2-en-1-yl diphosphate synthase (flavodoxin) (372 aa).

Residues Cys270, Cys273, Cys305, and Glu312 each contribute to the [4Fe-4S] cluster site.

It belongs to the IspG family. Requires [4Fe-4S] cluster as cofactor.

The catalysed reaction is (2E)-4-hydroxy-3-methylbut-2-enyl diphosphate + oxidized [flavodoxin] + H2O + 2 H(+) = 2-C-methyl-D-erythritol 2,4-cyclic diphosphate + reduced [flavodoxin]. It participates in isoprenoid biosynthesis; isopentenyl diphosphate biosynthesis via DXP pathway; isopentenyl diphosphate from 1-deoxy-D-xylulose 5-phosphate: step 5/6. Functionally, converts 2C-methyl-D-erythritol 2,4-cyclodiphosphate (ME-2,4cPP) into 1-hydroxy-2-methyl-2-(E)-butenyl 4-diphosphate. This is 4-hydroxy-3-methylbut-2-en-1-yl diphosphate synthase (flavodoxin) from Citrobacter koseri (strain ATCC BAA-895 / CDC 4225-83 / SGSC4696).